Consider the following 87-residue polypeptide: Down syndrome critical region protein 10 (87 aa).

As to expression, expressed in placenta and testis.

The chain is Down syndrome critical region protein 10 (DSCR10) from Homo sapiens (Human).